Reading from the N-terminus, the 281-residue chain is MNLPANTALFTPSWHAELELGYGRFDDSTRPTLRRHKGPLRVQKHLYAEGPEVCQHIIVHPPGGIAGGDRLDISATVGADAWAQLTSPGAAKWYRAASPAFQQLELHVQPGATLEWLPQESIVFSNAQAELSTRIELHGDAKLCYWDVVALGRPASGERFEHGHFQSHLDIRRDGTLLWHERQRIIGGDGLLDSPIGLDGRTVFATLLMTGEVGSELLEACRSLSMPNPVRGDLTQLPGLLVARCLADEALHARAWLIQIWKCLRPALLGREAVTPRIWNT.

This sequence belongs to the UreD family. As to quaternary structure, ureD, UreF and UreG form a complex that acts as a GTP-hydrolysis-dependent molecular chaperone, activating the urease apoprotein by helping to assemble the nickel containing metallocenter of UreC. The UreE protein probably delivers the nickel.

It is found in the cytoplasm. Its function is as follows. Required for maturation of urease via the functional incorporation of the urease nickel metallocenter. The sequence is that of Urease accessory protein UreD 2 from Pseudomonas syringae pv. syringae (strain B728a).